Here is a 315-residue protein sequence, read N- to C-terminus: Methionyl-tRNA formyltransferase (315 aa).

Residue 113 to 116 (SLLP) coordinates (6S)-5,6,7,8-tetrahydrofolate.

It belongs to the Fmt family.

It carries out the reaction L-methionyl-tRNA(fMet) + (6R)-10-formyltetrahydrofolate = N-formyl-L-methionyl-tRNA(fMet) + (6S)-5,6,7,8-tetrahydrofolate + H(+). In terms of biological role, attaches a formyl group to the free amino group of methionyl-tRNA(fMet). The formyl group appears to play a dual role in the initiator identity of N-formylmethionyl-tRNA by promoting its recognition by IF2 and preventing the misappropriation of this tRNA by the elongation apparatus. This Escherichia coli O6:K15:H31 (strain 536 / UPEC) protein is Methionyl-tRNA formyltransferase.